The sequence spans 144 residues: Large ribosomal subunit protein uL16 (144 aa).

A compositionally biased stretch (basic residues) spans 1 to 19; the sequence is MLLPKRVKYRRQHRPKTTG. A disordered region spans residues 1-23; the sequence is MLLPKRVKYRRQHRPKTTGRSKG.

This sequence belongs to the universal ribosomal protein uL16 family. As to quaternary structure, part of the 50S ribosomal subunit.

Binds 23S rRNA and is also seen to make contacts with the A and possibly P site tRNAs. This chain is Large ribosomal subunit protein uL16, found in Staphylococcus saprophyticus subsp. saprophyticus (strain ATCC 15305 / DSM 20229 / NCIMB 8711 / NCTC 7292 / S-41).